The sequence spans 399 residues: MAKLTVKDVELKGKKVLVRVDFNVPVKDGVITNDNRITAALPTIKYILEQGGRAILFSHLGRVKEEADKEGKSLAPVAADLAAKLGQDVKFIPGVTRGAELEAAVNALEDGQVLLVENTRFEDVDGKKESKNDPELGKYWASLGDGIFVNDAFGTAHRAHASNVGISANVEKAVAGFLLENEIAYIQEAVENPERPFVAILGGSKVSDKIGVIENLLEKADKVLIGGGMTYTFFKAQGIEIGNSLVEEDKLDVAKALLEKSNGKLILPVDSKEANAFADYTEVKYTEGEAVDPGFLGLDIGPKSIAKFDEALTGAKTVVWNGPMGVFENPDFQAGTIGVMDAIVKQPGVKSIIGGGDSAAAAINLGYADKFSWISTGGGASMELLEGKELPGLAALTEK.

Residues 21–23, Arg36, 59–62, Arg120, and Arg158 each bind substrate; these read DFN and HLGR. ATP contacts are provided by residues Lys209, Gly297, Glu328, and 355-358; that span reads GGDS.

It belongs to the phosphoglycerate kinase family. As to quaternary structure, monomer.

Its subcellular location is the cytoplasm. It catalyses the reaction (2R)-3-phosphoglycerate + ATP = (2R)-3-phospho-glyceroyl phosphate + ADP. Its pathway is carbohydrate degradation; glycolysis; pyruvate from D-glyceraldehyde 3-phosphate: step 2/5. The polypeptide is Phosphoglycerate kinase (Streptococcus thermophilus (strain CNRZ 1066)).